A 159-amino-acid polypeptide reads, in one-letter code: Large ribosomal subunit protein uL15 (159 aa).

The span at 1 to 11 (MKLNELRDNEG) shows a compositional bias: basic and acidic residues. A disordered region spans residues 1–40 (MKLNELRDNEGARYQSKRLGRGIGSGKGKTSGKGVKGQTS). The segment covering 21-35 (RGIGSGKGKTSGKGV) has biased composition (gly residues).

The protein belongs to the universal ribosomal protein uL15 family. In terms of assembly, part of the 50S ribosomal subunit.

Binds to the 23S rRNA. The sequence is that of Large ribosomal subunit protein uL15 from Paramagnetospirillum magneticum (strain ATCC 700264 / AMB-1) (Magnetospirillum magneticum).